Here is an 870-residue protein sequence, read N- to C-terminus: Probable inorganic carbon transporter subunit DabA (870 aa).

Cys-381, Asp-383, His-564, and Cys-579 together coordinate Zn(2+).

Belongs to the inorganic carbon transporter (TC 9.A.2) DabA family. As to quaternary structure, forms a complex with DabB. It depends on Zn(2+) as a cofactor.

It localises to the cell membrane. Functionally, part of an energy-coupled inorganic carbon pump. The polypeptide is Probable inorganic carbon transporter subunit DabA (Geobacillus kaustophilus (strain HTA426)).